A 362-amino-acid chain; its full sequence is Heat-inducible transcription repressor HrcA (362 aa).

Belongs to the HrcA family.

Negative regulator of class I heat shock genes (grpE-dnaK-dnaJ and groELS operons). Prevents heat-shock induction of these operons. In Rhizobium etli (strain CIAT 652), this protein is Heat-inducible transcription repressor HrcA.